Consider the following 462-residue polypeptide: Beta-glucosidase 1A (462 aa).

Substrate-binding residues include Q20, H123, and N169. The active-site Proton donor is E170. Position 301 (Y301) interacts with substrate. E365 serves as the catalytic Nucleophile. Substrate is bound by residues W415 and 422–423; that span reads EW.

Belongs to the glycosyl hydrolase 1 family.

The enzyme catalyses Hydrolysis of terminal, non-reducing beta-D-glucosyl residues with release of beta-D-glucose.. Its function is as follows. Plays an important role in cellulose degradation. Shows hydrolytic activity against several glycosidic compounds. In Phanerodontia chrysosporium (White-rot fungus), this protein is Beta-glucosidase 1A.